Consider the following 296-residue polypeptide: 33 kDa chaperonin (296 aa).

2 disulfides stabilise this stretch: Cys-233/Cys-235 and Cys-267/Cys-270.

The protein belongs to the HSP33 family. Under oxidizing conditions two disulfide bonds are formed involving the reactive cysteines. Under reducing conditions zinc is bound to the reactive cysteines and the protein is inactive.

Its subcellular location is the cytoplasm. Redox regulated molecular chaperone. Protects both thermally unfolding and oxidatively damaged proteins from irreversible aggregation. Plays an important role in the bacterial defense system toward oxidative stress. The chain is 33 kDa chaperonin from Actinobacillus pleuropneumoniae serotype 5b (strain L20).